A 177-amino-acid chain; its full sequence is Putative membrane protein 165 (177 aa).

Topologically, residues 1 to 7 (MYLVLLI) are intravirion. Residues 8 to 24 (AVILFIIVILMIFLISG) form a helical membrane-spanning segment. At 25-166 (LFYPEQEPAL…DPHPALKSKN (142 aa)) the chain is on the virion surface side.

The protein belongs to the asfivirus envelope protein p22 family.

It localises to the virion membrane. It is found in the host cell membrane. The sequence is that of Putative membrane protein 165 from African swine fever virus (isolate Pig/Kenya/KEN-50/1950) (ASFV).